Reading from the N-terminus, the 291-residue chain is MADDKKQLLIVTGMSGAGKTVVAHDLEDMGYFVVDNLPPTLLGSFWDYNSNDFHKVAVVIDLRVKTFYTDLLDEVNSLEDNGNVQATILFLDASDDVLVARYKETRRLPPLANNGKGRLLDGIQEERRILMPIKNRSNYIINTSNLSTKDLKQKLINTFSDRKRQPFSIEVMSFGFKYGMPIDADIVMDVRFLPNPFYIPELRPFTGLDKRVFDYVMNKKETQVFYQKLLDLLETAIPGYIKEGKEKLTIAIGCTGGQHRSVSIAQQLARDLSKKYPVDITHREVSRYIRK.

Glycine 13–threonine 20 is an ATP binding site. Aspartate 61–valine 64 provides a ligand contact to GTP.

This sequence belongs to the RapZ-like family.

Its function is as follows. Displays ATPase and GTPase activities. The protein is Nucleotide-binding protein lhv_0732 of Lactobacillus helveticus (strain DPC 4571).